The sequence spans 66 residues: Large ribosomal subunit protein uL29 (66 aa).

This sequence belongs to the universal ribosomal protein uL29 family.

This Roseiflexus castenholzii (strain DSM 13941 / HLO8) protein is Large ribosomal subunit protein uL29.